Reading from the N-terminus, the 841-residue chain is Protein translocase subunit SecA (841 aa).

Residues Q85, G103 to T107, and D492 contribute to the ATP site. Residues I790–R814 form a disordered region. The span at Q798–Q807 shows a compositional bias: basic and acidic residues. Zn(2+) contacts are provided by C825, C827, C836, and C837.

Belongs to the SecA family. In terms of assembly, monomer and homodimer. Part of the essential Sec protein translocation apparatus which comprises SecA, SecYEG and auxiliary proteins SecDF. Other proteins may also be involved. Zn(2+) serves as cofactor.

The protein resides in the cell membrane. The protein localises to the cytoplasm. It carries out the reaction ATP + H2O + cellular proteinSide 1 = ADP + phosphate + cellular proteinSide 2.. In terms of biological role, part of the Sec protein translocase complex. Interacts with the SecYEG preprotein conducting channel. Has a central role in coupling the hydrolysis of ATP to the transfer of proteins into and across the cell membrane, serving as an ATP-driven molecular motor driving the stepwise translocation of polypeptide chains across the membrane. The chain is Protein translocase subunit SecA from Bacillus licheniformis (strain ATCC 14580 / DSM 13 / JCM 2505 / CCUG 7422 / NBRC 12200 / NCIMB 9375 / NCTC 10341 / NRRL NRS-1264 / Gibson 46).